The following is a 524-amino-acid chain: Inosine-5'-monophosphate dehydrogenase 4 (524 aa).

2 CBS domains span residues 122-183 (FINS…VVSE) and 185-241 (MTKN…PLAS). Ser125 is modified (phosphoserine). Residues 279–281 (DSS) and 329–331 (GMG) each bind NAD(+). The K(+) site is built by Gly331 and Gly333. Ser334 is an IMP binding site. Residue Cys336 participates in K(+) binding. Cys336 serves as the catalytic Thioimidate intermediate. Residues 369–371 (DGG), 392–393 (GG), and 416–420 (YRGMG) each bind IMP. Catalysis depends on Arg438, which acts as the Proton acceptor. Gln450 is a binding site for IMP. K(+)-binding residues include Glu509, Gly510, and Gly511.

It belongs to the IMPDH/GMPR family. As to quaternary structure, homotetramer. Seems to be able to form heterotetramers composed from more than 1 of the 3 IMPDH gene products (IMD2-4). K(+) serves as cofactor.

The protein localises to the cytoplasm. The enzyme catalyses IMP + NAD(+) + H2O = XMP + NADH + H(+). It participates in purine metabolism; XMP biosynthesis via de novo pathway; XMP from IMP: step 1/1. With respect to regulation, mycophenolic acid (MPA) is a non-competitive inhibitor that prevents formation of the closed enzyme conformation by binding to the same site as the amobile flap. In contrast, mizoribine monophosphate (MZP) is a competitive inhibitor that induces the closed conformation. MPA is a potent inhibitor of mammalian IMPDHs but a poor inhibitor of the bacterial enzymes. MZP is a more potent inhibitor of bacterial IMPDH. Its function is as follows. Catalyzes the conversion of inosine 5'-phosphate (IMP) to xanthosine 5'-phosphate (XMP), the first committed and rate-limiting step in the de novo synthesis of guanine nucleotides, and therefore plays an important role in the regulation of cell growth. The polypeptide is Inosine-5'-monophosphate dehydrogenase 4 (Saccharomyces cerevisiae (strain ATCC 204508 / S288c) (Baker's yeast)).